The chain runs to 677 residues: Transketolase (677 aa).

Residue His-27 coordinates substrate. Thiamine diphosphate-binding positions include His-66 and 114-116 (GPL). A Mg(2+)-binding site is contributed by Asp-155. Thiamine diphosphate is bound by residues Gly-156 and Asn-185. Residues Asn-185 and Ile-187 each coordinate Mg(2+). Substrate is bound by residues His-261, Arg-356, and Ser-383. His-261 contacts thiamine diphosphate. Glu-415 and Phe-442 together coordinate thiamine diphosphate. Glu-415 acts as the Proton donor in catalysis. The substrate site is built by His-466, Asp-474, and Arg-525.

Belongs to the transketolase family. Homodimer. The cofactor is Mg(2+). Ca(2+) is required as a cofactor. Mn(2+) serves as cofactor. It depends on Co(2+) as a cofactor. Requires thiamine diphosphate as cofactor.

It carries out the reaction D-sedoheptulose 7-phosphate + D-glyceraldehyde 3-phosphate = aldehydo-D-ribose 5-phosphate + D-xylulose 5-phosphate. In terms of biological role, catalyzes the transfer of a two-carbon ketol group from a ketose donor to an aldose acceptor, via a covalent intermediate with the cofactor thiamine pyrophosphate. The protein is Transketolase (TKT) of Scheffersomyces stipitis (strain ATCC 58785 / CBS 6054 / NBRC 10063 / NRRL Y-11545) (Yeast).